Reading from the N-terminus, the 354-residue chain is CX3C chemokine receptor 1 (354 aa).

The Extracellular segment spans residues 1–32; it reads MSTSFPELDLENFEYDDSAEACYLGDIVAFGT. The helical transmembrane segment at 33–60 threads the bilayer; that stretch reads IFLSVFYALVFTFGLVGNLLVVLALTNS. Topologically, residues 61–70 are cytoplasmic; that stretch reads RKPKSITDIY. The helical transmembrane segment at 71–91 threads the bilayer; the sequence is LLNLALSDLLFVATLPFWTHY. Residues 92-104 lie on the Extracellular side of the membrane; the sequence is LISHEGLHNAMCK. A disulfide bridge links Cys-103 with Cys-176. A helical membrane pass occupies residues 105–126; the sequence is LTTAFFFIGFFGGIFFITVISI. The Cytoplasmic segment spans residues 127–143; that stretch reads DRYLAIVLAANSMNNRT. The helical transmembrane segment at 144 to 168 threads the bilayer; the sequence is VQHGVTISLGVWAAAILVASPQFMF. The Extracellular portion of the chain corresponds to 169 to 196; that stretch reads TKRKDNECLGDYPEVLQEMWPVLRNSEV. A helical membrane pass occupies residues 197–216; that stretch reads NILGFALPLLIMSFCYFRII. The Cytoplasmic segment spans residues 217-232; that stretch reads QTLFSCKNRKKARAVR. Residues 233–257 form a helical membrane-spanning segment; sequence LILLVVFAFFLFWTPYNIMIFLETL. Over 258–274 the chain is Extracellular; that stretch reads KFYNFFPSCDMKRDLRL. Residues 275–298 traverse the membrane as a helical segment; the sequence is ALSVTETVAFSHCCLNPFIYAFAG. Over 299-354 the chain is Cytoplasmic; sequence EKFRRYLGHLYRKCLAVLCGHPVHTGFSPESQRSRQDSILSSFTHYTSEGDGSLLL. Thr-345 is modified (phosphothreonine).

The protein belongs to the G-protein coupled receptor 1 family. As to quaternary structure, found in a ternary complex with CX3CL1 and ITGAV:ITGB3 or ITGA4:ITGB1. This protein is not N-glycosylated which is unusual for G-protein-coupled receptors. As to expression, specifically expressed in subsets of leukocytes: expressed in monocytes, subsets of T-cells and natural killer (NK) cells in the circulation, dendritic cells, as well as in microglia in the central nervous system (CNS). Expression level subdivides blood monocytes into two major functional subsets; CD14(+)CD16(-)-CX3CR1(low) inflammatory monocytes and CD14(low)CD16(+)CX3CR1(high) homeostatic monocytes. Expressed in myeloid-derived mucosal dendritic cells, which populate the entire lamina propria of the small intestine.

The protein localises to the cell membrane. Functionally, receptor for the C-X3-C chemokine fractalkine (CX3CL1) present on many early leukocyte cells; CX3CR1-CX3CL1 signaling exerts distinct functions in different tissue compartments, such as immune response, inflammation, cell adhesion and chemotaxis. CX3CR1-CX3CL1 signaling mediates cell migratory functions. Responsible for the recruitment of natural killer (NK) cells to inflamed tissues. Acts as a regulator of inflammation process leading to atherogenesis by mediating macrophage and monocyte recruitment to inflamed atherosclerotic plaques, promoting cell survival. Involved in airway inflammation by promoting interleukin 2-producing T helper (Th2) cell survival in inflamed lung. Involved in the migration of circulating monocytes to non-inflamed tissues, where they differentiate into macrophages and dendritic cells. Acts as a negative regulator of angiogenesis, probably by promoting macrophage chemotaxis. Plays a key role in brain microglia by regulating inflammatory response in the central nervous system (CNS) and regulating synapse maturation. Required to restrain the microglial inflammatory response in the CNS and the resulting parenchymal damage in response to pathological stimuli. Involved in brain development by participating in synaptic pruning, a natural process during which brain microglia eliminates extra synapses during postnatal development. Synaptic pruning by microglia is required to promote the maturation of circuit connectivity during brain development. Acts as an important regulator of the gut microbiota by controlling immunity to intestinal bacteria and fungi. Expressed in lamina propria dendritic cells in the small intestine, which form transepithelial dendrites capable of taking up bacteria in order to provide defense against pathogenic bacteria. Required to initiate innate and adaptive immune responses against dissemination of commensal fungi (mycobiota) component of the gut: expressed in mononuclear phagocytes (MNPs) and acts by promoting induction of antifungal IgG antibodies response to confer protection against disseminated C.albicans or C.auris infection. Also acts as a receptor for C-C motif chemokine CCL26, inducing cell chemotaxis. The polypeptide is CX3C chemokine receptor 1 (Mus musculus (Mouse)).